The following is a 443-amino-acid chain: Glutamate--tRNA ligase 2 (443 aa).

The short motif at 7–17 (PSPTGYLHVGN) is the 'HIGH' region element. The 'KMSKS' region signature appears at 236–240 (KISKR). Lysine 239 lines the ATP pocket.

The protein belongs to the class-I aminoacyl-tRNA synthetase family. Glutamate--tRNA ligase type 1 subfamily. In terms of assembly, monomer.

Its subcellular location is the cytoplasm. The enzyme catalyses tRNA(Glu) + L-glutamate + ATP = L-glutamyl-tRNA(Glu) + AMP + diphosphate. Its function is as follows. Catalyzes the attachment of glutamate to tRNA(Glu) in a two-step reaction: glutamate is first activated by ATP to form Glu-AMP and then transferred to the acceptor end of tRNA(Glu). This Ehrlichia canis (strain Jake) protein is Glutamate--tRNA ligase 2.